Reading from the N-terminus, the 423-residue chain is MSIQENLNNLIKPHGGKLIKTLKYGAERDECIKEAKSLPKIDISSREFGDLVMMGIGGFSPLNGFMKKEDWFSVCKNFTLADGTFWPIPITMSVSEEEAKKLKRGQKVALKYNKDINDISGTIEIDQVYEMTKKDKEMECKDIFTTTDSDHPGVKKVMEQKPFNVAGKVTTLSEGEFPIKYKGIYMTPEESRLNFAKKGWKTIAALQLRNPMHRSHEFLAKIAVEVCDGVFIHSLVGNLKPGDIPAEVRVKCIDALVDKYFVKKNVLQGGYPLDMRYGGPREALLHATFRQNYGCTHMIIGRDHAGVGDYYGPFDAQKIFDKIPYNADPKKRLLTQPMKIDWTFYCHKCDGMASLRTCPHTKKDRVIVSGTMVRKMLSEGKTLPDHFGRAESLKILADYYQHLDKSKKVTIKLQKFATGDAMK.

Positions 207 and 209 each coordinate sulfate. ATP is bound by residues 207–210 and 301–304; these read QLRN and GRDH. Residues Arg-209 and Asn-210 contribute to the active site. Ala-305 contributes to the sulfate binding site.

It belongs to the sulfate adenylyltransferase family.

The protein resides in the mitosome. The enzyme catalyses sulfate + ATP + H(+) = adenosine 5'-phosphosulfate + diphosphate. Its pathway is sulfur metabolism; hydrogen sulfide biosynthesis; sulfite from sulfate: step 1/3. Functionally, catalyzes the first intracellular reaction of sulfate assimilation, forming adenosine-5'-phosphosulfate (APS) from inorganic sulfate and ATP. This Entamoeba histolytica (strain ATCC 30459 / HM-1:IMSS / ABRM) protein is Sulfate adenylyltransferase.